A 205-amino-acid polypeptide reads, in one-letter code: VDYCKIKCSSGIHTVCQYGESTKPSKNCADKVIKSVGPTEEEKKLIVNEHNRFRQKVAQGLETRGNPGPQPAASDMNNLVWNDELAHIAQVWASQCQILVHDKCRNTAKYQVGQNIAYAGGSKLPDVVSLIKLWENEVKDFNYNKGITKQNFGKVGHYTQMIWAKTKEIGCGSLKYMKNNMQHHYLICNYGPAGNYLGQLPYTKK.

Cystine bridges form between cysteine 4/cysteine 16, cysteine 8/cysteine 104, cysteine 28/cysteine 96, and cysteine 171/cysteine 188. The SCP domain maps to valine 47–tyrosine 190.

It belongs to the CRISP family. Venom allergen 5-like subfamily. Expressed by the venom gland.

The protein localises to the secreted. This chain is Venom allergen 5, found in Polistes fuscatus (Paper wasp).